We begin with the raw amino-acid sequence, 104 residues long: Ig lambda-1 chain C region (104 aa).

In terms of domain architecture, Ig-like spans 6–99 (PSVTLFPPSS…EENTVEKSLS (94 aa)). The cysteines at positions 27 and 85 are disulfide-linked.

This chain is Ig lambda-1 chain C region, found in Rattus norvegicus (Rat).